Reading from the N-terminus, the 186-residue chain is Dynactin subunit 3 (186 aa).

Residue Ala-2 is modified to N-acetylalanine. The stretch at 135–157 (QQQDQCVEITEESKALLEEYNKT) forms a coiled coil.

It belongs to the dynactin subunit 3 family. Subunit of dynactin, a multiprotein complex part of a tripartite complex with dynein and a adapter, such as BICDL1, BICD2 or HOOK3. The dynactin complex is built around ACTR1A/ACTB filament and consists of an actin-related filament composed of a shoulder domain, a pointed end and a barbed end. Its length is defined by its flexible shoulder domain. The soulder is composed of 2 DCTN1 subunits, 4 DCTN2 and 2 DCTN3. The 4 DCNT2 (via N-terminus) bind the ACTR1A filament and act as molecular rulers to determine the length. The pointed end is important for binding dynein-dynactin cargo adapters. Consists of 4 subunits: ACTR10, DCNT4, DCTN5 and DCTN6. The barbed end is composed of a CAPZA1:CAPZB heterodimers, which binds ACTR1A/ACTB filament and dynactin and stabilizes dynactin.

It localises to the cytoplasm. It is found in the cytoskeleton. Its subcellular location is the microtubule organizing center. The protein resides in the centrosome. The protein localises to the chromosome. It localises to the centromere. It is found in the kinetochore. Its subcellular location is the spindle. The protein resides in the cleavage furrow. The protein localises to the midbody. In terms of biological role, part of the dynactin complex that activates the molecular motor dynein for ultra-processive transport along microtubules. Together with dynein may be involved in spindle assembly and cytokinesis. The chain is Dynactin subunit 3 (DCTN3) from Bos taurus (Bovine).